Consider the following 458-residue polypeptide: MASSTDTILKGKYPAKEHVRKVVEYIKSKEPEAEGVLYLEAQKTIMIEDNDEAAPFRQRRFFYYLTGCDLPDAYFTYDIATDKSTLFIPPIDPESVIWTGLPLSPKEALALYDVDEVLTTDTINAQLALPNQTKVWAIAPQISTHITFLEFPQKDFTLLKEAIEEARVRKSEYEVALMRKANEISKVGHTAVLKAVKHAKNERELEALFIKESIANGAREQAYHSIVASGTAAATLHYMKNSEELDGKLNLLLDAGGEYKCYASDITRTFPINGRFTPESRSIYDIVLSMQSQCISMLKAGVSWDEVHLLAHKVAIEGLLSLGILKGDKEEILKARTSVAFFPHGLGHYLGMDTHDTGGHPNYEDKDRLFRYLRVRGNLPEGSVVTVEPGIYFCRFIIEPYLKDPAHAQYINSDILEKYWEVGGVRIEDNVLITKDGYDNLTTVVKDVEEMEKIINES.

Mn(2+)-binding residues include Asp254, Asp265, Glu388, and Glu428.

This sequence belongs to the peptidase M24B family. It depends on Mn(2+) as a cofactor.

It carries out the reaction Release of any N-terminal amino acid, including proline, that is linked to proline, even from a dipeptide or tripeptide.. Functionally, catalyzes the removal of a penultimate prolyl residue from the N-termini of peptides. This is Probable Xaa-Pro aminopeptidase pepP (pepP) from Botryotinia fuckeliana (strain B05.10) (Noble rot fungus).